The sequence spans 486 residues: Transmembrane protein 39A (486 aa).

An N-linked (GlcNAc...) asparagine glycan is attached at Asn31. The next 8 helical transmembrane spans lie at 72–92 (SLFF…IQYI), 110–130 (TSLN…VMLA), 155–175 (LILA…WTLV), 182–202 (SVLN…LYCF), 285–305 (EVLF…LCFV), 317–337 (CEHL…QLLP), 418–438 (VLNL…YSLL), and 444–464 (NHTL…FKLL).

The protein belongs to the TMEM39 family. As to quaternary structure, interacts with SACM1L, SEC23A and SEC24A.

Its subcellular location is the endoplasmic reticulum membrane. In terms of biological role, regulates autophagy by controlling the spatial distribution and levels of the intracellular phosphatidylinositol 4-phosphate (PtdIns(4)P) pools. Modulates (PtdIns(4)P) levels by regulating the ER-to-Golgi trafficking of the phosphatidylinositide phosphatase SACM1L. This is Transmembrane protein 39A (Tmem39a) from Mus musculus (Mouse).